A 663-amino-acid polypeptide reads, in one-letter code: F-box protein DAS1 (663 aa).

Residues 46 to 91 (VFPLTKLPDELMQEVFSHLPQPDRLQLCLVNKRLNKIATKLLYRRI) form the F-box domain.

In terms of assembly, interacts with SKP1. Component of the probable SCF(DAS1) complex containing CDC53, SKP1, RBX1 and DAS1.

It functions in the pathway protein modification; protein ubiquitination. In terms of biological role, substrate recognition component of a SCF (SKP1-CUL1-F-box protein) E3 ubiquitin-protein ligase complex which mediates the ubiquitination and subsequent proteasomal degradation of target proteins. Probably recognizes and binds to phosphorylated target proteins. The polypeptide is F-box protein DAS1 (DAS1) (Saccharomyces cerevisiae (strain ATCC 204508 / S288c) (Baker's yeast)).